Here is a 189-residue protein sequence, read N- to C-terminus: Adenylate kinase (189 aa).

10-15 (AAGKGT) contacts ATP. The tract at residues 30-59 (STGDMLRAAIASGSELGQKVKGVLDRGELV) is NMP. Residues Thr-31, Arg-36, 57-59 (ELV), 85-88 (GFPR), and Gln-92 contribute to the AMP site. Residues 126-136 (KRFAEQGRPDD) are LID. Residue Arg-127 coordinates ATP. 2 residues coordinate AMP: Arg-133 and Arg-144. ATP is bound at residue Ala-172.

The protein belongs to the adenylate kinase family. As to quaternary structure, monomer.

It localises to the cytoplasm. The catalysed reaction is AMP + ATP = 2 ADP. It participates in purine metabolism; AMP biosynthesis via salvage pathway; AMP from ADP: step 1/1. Catalyzes the reversible transfer of the terminal phosphate group between ATP and AMP. Plays an important role in cellular energy homeostasis and in adenine nucleotide metabolism. This Caulobacter sp. (strain K31) protein is Adenylate kinase.